The chain runs to 141 residues: MEIRVFRQEDFEEVITLWERCDLLRPWNDPEMDIERKVNHDVSLFLVAEVSGEVVGTVMGGYDGHRGSAYYLGVHPEFRGRGIANALLNRLEKKLIARGCPKIQIMVRDDNDVVLGMYERLGYEHSDALSLGKRLIEDEEY.

Positions 1-141 (MEIRVFRQED…GKRLIEDEEY (141 aa)) constitute an N-acetyltransferase domain.

It belongs to the acetyltransferase family. YpeA subfamily.

The sequence is that of Acetyltransferase YpeA from Salmonella choleraesuis (strain SC-B67).